Consider the following 198-residue polypeptide: HTH-type transcriptional regulator BetI (198 aa).

In terms of domain architecture, HTH tetR-type spans 8-68 (PLRRRELIDA…ATMRHLLREL (61 aa)). The segment at residues 31–50 (TVAQIAHEAGVSPALAHHYF) is a DNA-binding region (H-T-H motif).

It participates in amine and polyamine biosynthesis; betaine biosynthesis via choline pathway [regulation]. Functionally, repressor involved in the biosynthesis of the osmoprotectant glycine betaine. It represses transcription of the choline transporter BetT and the genes of BetAB involved in the synthesis of glycine betaine. In Brucella suis (strain ATCC 23445 / NCTC 10510), this protein is HTH-type transcriptional regulator BetI.